The primary structure comprises 755 residues: Thermostable beta-glucosidase B (755 aa).

Asp231 is a catalytic residue.

The protein belongs to the glycosyl hydrolase 3 family.

It carries out the reaction Hydrolysis of terminal, non-reducing beta-D-glucosyl residues with release of beta-D-glucose.. The protein operates within glycan metabolism; cellulose degradation. The polypeptide is Thermostable beta-glucosidase B (bglB) (Acetivibrio thermocellus (strain ATCC 27405 / DSM 1237 / JCM 9322 / NBRC 103400 / NCIMB 10682 / NRRL B-4536 / VPI 7372) (Clostridium thermocellum)).